Reading from the N-terminus, the 257-residue chain is MRMDERKADELRPISIEINYLHHPEGSVLISIGNTKVICTASLEDRVPPFLRGQGKGWITAEYSMLPRATEQRNMRESTRGKVSGRTMEIQRLIGRALRSIIDLDKIGERTVWIDCDVIQADGGTRTTSITGAFVALSLAMEKALANGAIQEWPIDDFLAAVSVGIDPKLGAILDLCYAEDAQAEVDMNVVMTGKGEYVELQGTGEEATFSHNQLLTILALADKGIKQLIEEQRNALGAIANRVDEAKQKKKEQSEA.

Phosphate-binding positions include R86 and 124–126 (GTR).

This sequence belongs to the RNase PH family. As to quaternary structure, homohexameric ring arranged as a trimer of dimers.

The enzyme catalyses tRNA(n+1) + phosphate = tRNA(n) + a ribonucleoside 5'-diphosphate. Its function is as follows. Phosphorolytic 3'-5' exoribonuclease that plays an important role in tRNA 3'-end maturation. Removes nucleotide residues following the 3'-CCA terminus of tRNAs; can also add nucleotides to the ends of RNA molecules by using nucleoside diphosphates as substrates, but this may not be physiologically important. Probably plays a role in initiation of 16S rRNA degradation (leading to ribosome degradation) during starvation. This Halalkalibacterium halodurans (strain ATCC BAA-125 / DSM 18197 / FERM 7344 / JCM 9153 / C-125) (Bacillus halodurans) protein is Ribonuclease PH.